A 610-amino-acid chain; its full sequence is Phosphoenolpyruvate carboxykinase [GTP] (610 aa).

Residues Arg82 and 221 to 223 (YGG) each bind substrate. The Mn(2+) site is built by Lys230 and His250. Ser272 is a binding site for substrate. A GTP-binding site is contributed by 273–278 (ACGKTN). Cys274 is an active-site residue. Residue Asp297 participates in Mn(2+) binding. 387 to 389 (NSR) contributes to the substrate binding site. Residues Arg389, Arg420, and 515–518 (FGDN) contribute to the GTP site.

Belongs to the phosphoenolpyruvate carboxykinase [GTP] family. Monomer. It depends on Mn(2+) as a cofactor.

Its subcellular location is the cytoplasm. The catalysed reaction is oxaloacetate + GTP = phosphoenolpyruvate + GDP + CO2. Its pathway is carbohydrate biosynthesis; gluconeogenesis. Catalyzes the conversion of oxaloacetate (OAA) to phosphoenolpyruvate (PEP), the rate-limiting step in the metabolic pathway that produces glucose from lactate and other precursors derived from the citric acid cycle. This is Phosphoenolpyruvate carboxykinase [GTP] from Corynebacterium glutamicum (strain R).